The primary structure comprises 266 residues: uncharacterized protein (266 aa).

An N-terminal signal peptide occupies residues 1–22 (MGYFKRVVLYIIVMVVSVFIIG). C23 carries N-palmitoyl cysteine lipidation. C23 is lipidated: S-diacylglycerol cysteine.

Belongs to the staphylococcal tandem lipoprotein family.

It localises to the cell membrane. This is an uncharacterized protein from Staphylococcus aureus (strain N315).